Reading from the N-terminus, the 327-residue chain is CREB homolog crh-1 (327 aa).

Residues 16-75 (SPLMMLLFKALQEGGDSEDEARRRREQLNRRPSYRMILKDLETADKVMKKEPEETPPSSV) enclose the KID domain. Disordered regions lie at residues 27 to 114 (QEGG…SPYG) and 151 to 200 (KVFP…VQSL). Residues 35 to 44 (EARRRREQLN) are compositionally biased toward basic and acidic residues. Ser48 bears the Phosphoserine mark. Over residues 52 to 68 (ILKDLETADKVMKKEPE) the composition is skewed to basic and acidic residues. A compositionally biased stretch (polar residues) spans 71-84 (PPSSVDASPLQFQS). Positions 161 to 172 (GLGGGGGGGGVP) are enriched in gly residues. Positions 173 to 199 (GPSSGIAGMSVQPPTSSTPSQQQSVQS) are enriched in low complexity. Residues 266 to 317 (NRKRQVRLLKNREAAKECRRKKKEYVKCLENRVSVLENQNKALIEELKTLKE) enclose the bZIP domain. Residues 267 to 292 (RKRQVRLLKNREAAKECRRKKKEYVK) form a basic motif region. The stretch at 284-318 (RRKKKEYVKCLENRVSVLENQNKALIEELKTLKEL) forms a coiled coil. A leucine-zipper region spans residues 294–315 (LENRVSVLENQNKALIEELKTL).

The protein belongs to the bZIP family. As to quaternary structure, interacts with CREB-regulated transcription coactivator homolog crtc-1. In terms of processing, transcriptional activity is enhanced by phosphorylation. Phosphorylated by cmk-1. As to expression, expressed widely, including in head neurons AFD, gustatory neurons ASE, the olfactory neurons AWC, and in the ASI sensory neurons, as well as in the intestine and gonads in hermaphrodites.

The protein localises to the nucleus. In terms of biological role, transcription factor. Transcriptional activity probably positively regulated by phosphorylation. Modulates expression of target genes, acting by binding to regulatory cAMP response elements (CRE). Acts downstream of the calcium-triggered CaMKK-CaMK1 signaling cascade, consisting of the protein kinase kinase ckk-1 and the protein kinase cmk-1. Plays a role in learning and memory, feeding behavior, stress response, entry into the dauer stage and modulation of lifespan. Involved in commitment to the developmentally arrested larval state known as dauer, acting by positively regulating the expression of dauer-inhibiting TGF-beta-like daf-7 in the ASI neurons. Plays a role in both associative and non-associative long-term memory (LTM). Involved in modulating feeding behavior, acting by regulating transcription of tryptophan hydroxylase tph-1 in serotonergic ADF neurons. Regulates transcription of genes involved in endoplasmic reticulum (ER) stress. Involved in modulation of lifespan, in response to raised temperature, but independently of the heat-shock response pathway, acting by regulating transcription of FMRFamide-like neuropeptides flp-6 in the AFD neuron. Plays a role in associative long-term memory (LTM) and learning. Its function is as follows. Plays a role in associative long-term memory (LTM) and learning; perhaps required at the time of acquisition and/or the consolidation phase of memory formation. The polypeptide is CREB homolog crh-1 (Caenorhabditis elegans).